Reading from the N-terminus, the 101-residue chain is MVDSFVQSKLRDNKVTLFVKGSCPYCKNAIVLLKEFNFLPGCLEVVDITGMDDIQDYFQKTTGQRTVPRVFIGTKCIGGFSDLQKMEQQLPMMLRQIGALV.

One can recognise a Glutaredoxin domain in the interval 3 to 101; that stretch reads DSFVQSKLRD…MMLRQIGALV (99 aa). Cysteine 23 and cysteine 26 are joined by a disulfide.

This sequence belongs to the glutaredoxin family.

The protein resides in the cytoplasm. Its function is as follows. Has a glutathione-disulfide oxidoreductase activity in the presence of NADPH and glutathione reductase. Reduces low molecular weight disulfides and proteins. The protein is Glutaredoxin-1 (GLRX) of Gallus gallus (Chicken).